Here is a 195-residue protein sequence, read N- to C-terminus: Large ribosomal subunit protein eL15 (195 aa).

Residues 174–195 (GHGRLGSAKSRPSIRANGRLRR) are disordered.

Belongs to the eukaryotic ribosomal protein eL15 family.

In Picrophilus torridus (strain ATCC 700027 / DSM 9790 / JCM 10055 / NBRC 100828 / KAW 2/3), this protein is Large ribosomal subunit protein eL15.